The following is a 652-amino-acid chain: Carboxypeptidase S1 homolog A (652 aa).

An N-terminal signal peptide occupies residues 1 to 19 (MRLAASIAVALPVIGAASA). Residues Cys50 and Cys121 are joined by a disulfide bond. 6 N-linked (GlcNAc...) asparagine glycosylation sites follow: Asn77, Asn132, Asn161, Asn168, Asn184, and Asn202. The active site involves Ser238. N-linked (GlcNAc...) asparagine glycosylation is found at Asn260, Asn299, Asn347, and Asn410. Disulfide bonds link Cys325-Cys361 and Cys332-Cys354. Residue Asp458 is part of the active site. Residue Cys461 participates in substrate binding. 3 N-linked (GlcNAc...) asparagine glycosylation sites follow: Asn474, Asn492, and Asn505. The active site involves His516. Residue Glu517 coordinates substrate. N-linked (GlcNAc...) asparagine glycosylation is present at Asn594. The disordered stretch occupies residues 608–628 (AASKGNPPPTTTSSPTASPTA). Residues 618–628 (TTSSPTASPTA) show a composition bias toward low complexity. A lipid anchor (GPI-anchor amidated glycine) is attached at Gly629. Residues 630–652 (SAMLKAPVAMLAISALTVLAFYL) constitute a propeptide, removed in mature form.

This sequence belongs to the peptidase S10 family.

The protein localises to the cell membrane. The catalysed reaction is Preferential release of a C-terminal arginine or lysine residue.. In terms of biological role, extracellular serine carboxypeptidase that contributes to pathogenicity. The polypeptide is Carboxypeptidase S1 homolog A (SCPA) (Trichophyton verrucosum (strain HKI 0517)).